A 557-amino-acid chain; its full sequence is Tryptophan 2-monooxygenase (557 aa).

FMN is bound by residues Ser-49, Glu-69, Arg-71, Arg-77, and Arg-98. Arg-98 serves as a coordination point for substrate.

It belongs to the tryptophan 2-monooxygenase family. Monomer. Requires FMN as cofactor.

It catalyses the reaction L-tryptophan + O2 = indole-3-acetamide + CO2 + H2O. It participates in plant hormone metabolism; auxin biosynthesis. This is Tryptophan 2-monooxygenase (iaaM) from Pseudomonas savastanoi (Pseudomonas syringae pv. savastanoi).